A 420-amino-acid chain; its full sequence is RING finger protein 39 (420 aa).

The segment at 88–135 adopts an RING-type zinc-finger fold; sequence CPLCGGSFEDPVLLACEHSFCRACLARRWGTPPATGTEASPTACPCCG. One can recognise a B30.2/SPRY domain in the interval 210–420; it reads DDLPEDYPVV…APLRIVPAES (211 aa). Residues 246–265 are disordered; it reads DRRSVQLAPPGTPAPPDGPK.

It localises to the cytoplasm. It carries out the reaction S-ubiquitinyl-[E2 ubiquitin-conjugating enzyme]-L-cysteine + [acceptor protein]-L-lysine = [E2 ubiquitin-conjugating enzyme]-L-cysteine + N(6)-ubiquitinyl-[acceptor protein]-L-lysine.. It functions in the pathway protein modification; protein ubiquitination. Its function is as follows. Plays an inhibitory role in anti-RNA viral innate immunity by targeting the adapter DDX3X and promoting its 'Lys-48'-linked polyubiquitination. Alternatively, enhances the cGAS-STING pathway activation by promoting 'Lys-63'-linked ubiquitination of STING1, facilitating the STING1-TBK1 complex formation and STING1 activation. The chain is RING finger protein 39 (RNF39) from Pan troglodytes (Chimpanzee).